We begin with the raw amino-acid sequence, 431 residues long: Phosphoribosylamine--glycine ligase (431 aa).

One can recognise an ATP-grasp domain in the interval 108–315 (KDFLARHEIP…LVLLVEAAFA (208 aa)). Residue 134–195 (LQEKGAPIVI…EEFLDGEEAS (62 aa)) participates in ATP binding. Mg(2+) contacts are provided by glutamate 285 and asparagine 287.

It belongs to the GARS family. Requires Mg(2+) as cofactor. It depends on Mn(2+) as a cofactor.

It catalyses the reaction 5-phospho-beta-D-ribosylamine + glycine + ATP = N(1)-(5-phospho-beta-D-ribosyl)glycinamide + ADP + phosphate + H(+). It functions in the pathway purine metabolism; IMP biosynthesis via de novo pathway; N(1)-(5-phospho-D-ribosyl)glycinamide from 5-phospho-alpha-D-ribose 1-diphosphate: step 2/2. In Pseudomonas putida (strain ATCC 47054 / DSM 6125 / CFBP 8728 / NCIMB 11950 / KT2440), this protein is Phosphoribosylamine--glycine ligase.